The following is a 260-amino-acid chain: Malonyl-[acyl-carrier protein] O-methyltransferase (260 aa).

Belongs to the methyltransferase superfamily.

It carries out the reaction malonyl-[ACP] + S-adenosyl-L-methionine = malonyl-[ACP] methyl ester + S-adenosyl-L-homocysteine. Its pathway is cofactor biosynthesis; biotin biosynthesis. Its function is as follows. Converts the free carboxyl group of a malonyl-thioester to its methyl ester by transfer of a methyl group from S-adenosyl-L-methionine (SAM). It allows to synthesize pimeloyl-ACP via the fatty acid synthetic pathway. The protein is Malonyl-[acyl-carrier protein] O-methyltransferase of Chlorobium phaeovibrioides (strain DSM 265 / 1930) (Prosthecochloris vibrioformis (strain DSM 265)).